The chain runs to 351 residues: Histidinol-phosphate aminotransferase (351 aa).

N6-(pyridoxal phosphate)lysine is present on lysine 213.

This sequence belongs to the class-II pyridoxal-phosphate-dependent aminotransferase family. Histidinol-phosphate aminotransferase subfamily. As to quaternary structure, homodimer. Requires pyridoxal 5'-phosphate as cofactor.

The enzyme catalyses L-histidinol phosphate + 2-oxoglutarate = 3-(imidazol-4-yl)-2-oxopropyl phosphate + L-glutamate. It functions in the pathway amino-acid biosynthesis; L-histidine biosynthesis; L-histidine from 5-phospho-alpha-D-ribose 1-diphosphate: step 7/9. This is Histidinol-phosphate aminotransferase from Thermoanaerobacter sp. (strain X514).